We begin with the raw amino-acid sequence, 150 residues long: UPF0756 membrane protein YPN_1328 (150 aa).

Transmembrane regions (helical) follow at residues 16–36 (ALGI…LIAI), 51–71 (YGLT…IASG), 88–108 (ILAI…VSLM), and 114–134 (VVAG…GVPV).

The protein belongs to the UPF0756 family.

The protein resides in the cell membrane. The sequence is that of UPF0756 membrane protein YPN_1328 from Yersinia pestis bv. Antiqua (strain Nepal516).